The primary structure comprises 98 residues: NADH-ubiquinone oxidoreductase chain 4L (98 aa).

The next 3 helical transmembrane spans lie at 2–22, 29–49, and 61–81; these read PPIF…TLIF, SLLC…LIIL, and ILLL…LVMV.

It belongs to the complex I subunit 4L family. Core subunit of respiratory chain NADH dehydrogenase (Complex I) which is composed of 45 different subunits.

The protein localises to the mitochondrion inner membrane. It carries out the reaction a ubiquinone + NADH + 5 H(+)(in) = a ubiquinol + NAD(+) + 4 H(+)(out). Its function is as follows. Core subunit of the mitochondrial membrane respiratory chain NADH dehydrogenase (Complex I) which catalyzes electron transfer from NADH through the respiratory chain, using ubiquinone as an electron acceptor. Part of the enzyme membrane arm which is embedded in the lipid bilayer and involved in proton translocation. The polypeptide is NADH-ubiquinone oxidoreductase chain 4L (MT-ND4L) (Avahi unicolor (Sambirano woolly lemur)).